The following is a 580-amino-acid chain: Multidrug resistance-like ATP-binding protein MdlB (580 aa).

The region spanning 25-310 is the ABC transmembrane type-1 domain; it reads LILAFIFLLS…ITIQQSVLQQ (286 aa). A run of 6 helical transmembrane segments spans residues 26–46, 61–81, 150–170, 173–193, 247–267, and 268–288; these read ILAF…PILI, LLII…SVFL, IILI…MALV, FILP…TPLL, LDGF…LCNF, and MFLF…YAFI. Residues 341-575 form the ABC transporter domain; the sequence is INIQNVSFYH…KSCYYKMYKF (235 aa). 375 to 382 lines the ATP pocket; the sequence is GHTGSGKS.

It belongs to the ABC transporter superfamily. Drug exporter-2 (TC 3.A.1.117) family.

It is found in the cell membrane. The catalysed reaction is ATP + H2O + xenobioticSide 1 = ADP + phosphate + xenobioticSide 2.. The protein is Multidrug resistance-like ATP-binding protein MdlB (mdlB) of Buchnera aphidicola subsp. Acyrthosiphon pisum (strain APS) (Acyrthosiphon pisum symbiotic bacterium).